The following is a 758-amino-acid chain: Vitamin K-dependent gamma-carboxylase (758 aa).

A disordered region spans residues 1 to 34 (MAVSARPARAPRGPDKVKKDKAAQTSGPRQGSQM). Ala-2 is modified (N-acetylalanine). The Cytoplasmic portion of the chain corresponds to 2-60 (AVSARPARAPRGPDKVKKDKAAQTSGPRQGSQMGKLLGFEWTDVSSWERLVTLLNRPTD). Residues 12 to 22 (RGPDKVKKDKA) are compositionally biased toward basic and acidic residues. The span at 23–33 (AQTSGPRQGSQ) shows a compositional bias: polar residues. A helical membrane pass occupies residues 61-81 (PASLAVFRFLFGLMMVLDIPQ). Residues 82 to 113 (ERGLSSLDRRYLDGLEVCRFPLLDALQPLPLD) lie on the Lumenal side of the membrane. An intrachain disulfide couples Cys-99 to Cys-450. Residues 114–134 (WMYLVYTIMFLGALGMMLGLC) traverse the membrane as a helical segment. Residues 135–136 (YR) are Cytoplasmic-facing. Residues 137 to 157 (ISCVLFLLPYWYVFLLDKTSW) traverse the membrane as a helical segment. Over 158-292 (NNHSYLYGLL…VSYFHCMNSQ (135 aa)) the chain is Lumenal. A helical transmembrane segment spans residues 293–313 (LFSIGMFPYVMLASSPLFCSP). Over 314–361 (EWPRKLVAHCPKKLQELLPLRTAPQPSTSCMYKRSRARGSQKPGLRHQ) the chain is Cytoplasmic. The chain crosses the membrane as a helical span at residues 362-382 (LSTAFTLLYLLEQLFLPYSHF). Residues 383–758 (LTQGYNNWTN…PDSHPVHSEF (376 aa)) lie on the Lumenal side of the membrane. Positions 726 to 758 (RPFEPAGEPSPVNTDSSNPNPPEPDSHPVHSEF) are disordered. Residues 749 to 758 (PDSHPVHSEF) show a composition bias toward basic and acidic residues.

It belongs to the vitamin K-dependent gamma-carboxylase family. Monomer. May interact with CALU.

The protein localises to the endoplasmic reticulum membrane. It catalyses the reaction 4-carboxy-L-glutamyl-[protein] + 2,3-epoxyphylloquinone + H2O + H(+) = phylloquinol + L-glutamyl-[protein] + CO2 + O2. In terms of biological role, mediates the vitamin K-dependent carboxylation of glutamate residues to calcium-binding gamma-carboxyglutamate (Gla) residues with the concomitant conversion of the reduced hydroquinone form of vitamin K to vitamin K epoxide. Catalyzes gamma-carboxylation of various proteins, such as blood coagulation factors (F2, F7, F9 and F10), osteocalcin (BGLAP) or matrix Gla protein (MGP). The protein is Vitamin K-dependent gamma-carboxylase (GGCX) of Ovis aries (Sheep).